The primary structure comprises 131 residues: Large ribosomal subunit protein bL19 (131 aa).

It belongs to the bacterial ribosomal protein bL19 family.

Its function is as follows. This protein is located at the 30S-50S ribosomal subunit interface and may play a role in the structure and function of the aminoacyl-tRNA binding site. The protein is Large ribosomal subunit protein bL19 of Anaeromyxobacter sp. (strain K).